Here is a 205-residue protein sequence, read N- to C-terminus: Large ribosomal subunit protein uL4 (205 aa).

Positions 44-79 (RAGTKAQKTRREVSGGGAKPWRQKGTGRARAGSSRS) are disordered.

The protein belongs to the universal ribosomal protein uL4 family. In terms of assembly, part of the 50S ribosomal subunit.

Its function is as follows. One of the primary rRNA binding proteins, this protein initially binds near the 5'-end of the 23S rRNA. It is important during the early stages of 50S assembly. It makes multiple contacts with different domains of the 23S rRNA in the assembled 50S subunit and ribosome. Forms part of the polypeptide exit tunnel. This Coxiella burnetii (strain RSA 331 / Henzerling II) protein is Large ribosomal subunit protein uL4.